Reading from the N-terminus, the 687-residue chain is Dictomallein (687 aa).

2 disordered regions span residues 1–45 (MGNG…SRRL) and 73–112 (TAGGAAPLTPAVASPAGPTGSTPGSTPGATTAPAPSSTSA). One can recognise a Peptidase M66 domain in the interval 233–501 (PVFGTDADVQ…QAWIASRVLA (269 aa)). H393 is a Zn(2+) binding site. E394 is a catalytic residue. 2 residues coordinate Zn(2+): H397 and H403.

It belongs to the dictomallein family. It depends on Zn(2+) as a cofactor.

This is Dictomallein (dtmL) from Burkholderia pseudomallei (strain 1710b).